Here is a 251-residue protein sequence, read N- to C-terminus: Imidazole glycerol phosphate synthase subunit HisF (251 aa).

Active-site residues include aspartate 11 and aspartate 130.

It belongs to the HisA/HisF family. In terms of assembly, heterodimer of HisH and HisF.

It is found in the cytoplasm. It catalyses the reaction 5-[(5-phospho-1-deoxy-D-ribulos-1-ylimino)methylamino]-1-(5-phospho-beta-D-ribosyl)imidazole-4-carboxamide + L-glutamine = D-erythro-1-(imidazol-4-yl)glycerol 3-phosphate + 5-amino-1-(5-phospho-beta-D-ribosyl)imidazole-4-carboxamide + L-glutamate + H(+). It participates in amino-acid biosynthesis; L-histidine biosynthesis; L-histidine from 5-phospho-alpha-D-ribose 1-diphosphate: step 5/9. In terms of biological role, IGPS catalyzes the conversion of PRFAR and glutamine to IGP, AICAR and glutamate. The HisF subunit catalyzes the cyclization activity that produces IGP and AICAR from PRFAR using the ammonia provided by the HisH subunit. This chain is Imidazole glycerol phosphate synthase subunit HisF, found in Chlorobium limicola (strain DSM 245 / NBRC 103803 / 6330).